A 217-amino-acid chain; its full sequence is Glycosylphosphatidylinositol anchor biosynthesis protein 11 (217 aa).

The N-linked (GlcNAc...) asparagine glycan is linked to N20. 6 helical membrane passes run 41 to 61 (VYVR…LYWF), 66 to 86 (DFNL…YLIF), 107 to 127 (FITL…IVLF), 139 to 159 (WLLA…VFNC), 169 to 189 (YFIS…LDWD), and 197 to 217 (VPLI…GGYI).

It belongs to the PIGF family.

The protein resides in the endoplasmic reticulum membrane. It functions in the pathway glycolipid biosynthesis; glycosylphosphatidylinositol-anchor biosynthesis. Its function is as follows. Acts in the GPI biosynthetic pathway between GlcNAc-PI synthesis and GPI transfer to protein. The polypeptide is Glycosylphosphatidylinositol anchor biosynthesis protein 11 (GPI11) (Kluyveromyces lactis (strain ATCC 8585 / CBS 2359 / DSM 70799 / NBRC 1267 / NRRL Y-1140 / WM37) (Yeast)).